The sequence spans 109 residues: uncharacterized protein (109 aa).

The signal sequence occupies residues 1–25 (MKGIFLVVQLGFSIMVFLFLAAVNW). A helical transmembrane segment spans residues 73 to 95 (YPVMSALMIISFLYVLAALFLLI).

The protein localises to the membrane. This is an uncharacterized protein from Bacillus subtilis (strain 168).